Here is a 306-residue protein sequence, read N- to C-terminus: Ornithine carbamoyltransferase (306 aa).

Residues 46–49 (STRT), Q73, R97, and 124–127 (HPTQ) each bind carbamoyl phosphate. Residues N156, D220, and 224-225 (SM) each bind L-ornithine. Carbamoyl phosphate contacts are provided by residues 260–261 (CL) and R288.

The protein belongs to the aspartate/ornithine carbamoyltransferase superfamily. OTCase family.

It is found in the cytoplasm. The catalysed reaction is carbamoyl phosphate + L-ornithine = L-citrulline + phosphate + H(+). Its pathway is amino-acid biosynthesis; L-arginine biosynthesis; L-arginine from L-ornithine and carbamoyl phosphate: step 1/3. Reversibly catalyzes the transfer of the carbamoyl group from carbamoyl phosphate (CP) to the N(epsilon) atom of ornithine (ORN) to produce L-citrulline. This Campylobacter jejuni (strain RM1221) protein is Ornithine carbamoyltransferase.